A 1282-amino-acid polypeptide reads, in one-letter code: Cytokine receptor (1282 aa).

An N-terminal signal peptide occupies residues 1-23; it reads MVAQEQLVLLLMLLAGCRGGANA. Over 24–889 the chain is Extracellular; sequence ILDPGWVIPS…CTPDTHSVKA (866 aa). Residues Asn-44, Asn-86, Asn-87, and Asn-114 are each glycosylated (N-linked (GlcNAc...) asparagine). A disulfide bridge connects residues Cys-47 and Cys-106. 7 consecutive Fibronectin type-III domains span residues 124–220, 227–327, 329–431, 436–535, 537–631, 635–735, and 736–836; these read PLLV…NHFE, PGQN…TAPA, PRRP…SNRD, EPRN…KKDD, AKME…TGEA, QPRE…TAIG, and VPSP…LMST. Residues Cys-132 and Cys-142 are joined by a disulfide bond. Asn-143 and Asn-156 each carry an N-linked (GlcNAc...) asparagine glycan. Residues Cys-173 and Cys-183 are joined by a disulfide bond. N-linked (GlcNAc...) asparagine glycans are attached at residues Asn-184, Asn-230, Asn-235, Asn-278, Asn-298, Asn-310, Asn-376, Asn-448, and Asn-466. Cys-472 and Cys-482 are disulfide-bonded. Residues Asn-568, Asn-581, Asn-626, Asn-676, Asn-703, Asn-777, Asn-790, and Asn-862 are each glycosylated (N-linked (GlcNAc...) asparagine). Residues 890-910 traverse the membrane as a helical segment; it reads MYQTIEVTVAILVLGVIFYLV. Over 911–1282 the chain is Cytoplasmic; the sequence is YKKYRKMSDI…NAMAHNRHVL (372 aa). Ser-976 is modified (phosphoserine). Disordered regions lie at residues 989–1092 and 1238–1258; these read TASS…HTFS and TVGS…QHSR. 2 stretches are compositionally biased toward basic and acidic residues: residues 999 to 1009 and 1033 to 1064; these read VDRDGYDDNHE and NDRE…DREQ.

The protein belongs to the type I cytokine receptor family. In terms of assembly, interacts with wdp; the interaction promotes internalization of dome and its subsequent lysosomal degradation; thereby reducing JAK/STAT signaling. Post-translationally, undergoes lysosomal degradation. In stage 11 embryos, tracheal pits show highest expression, at stage 14 high expression is detected in the posterior spiracles, gut and head.

It localises to the apicolateral cell membrane. In terms of biological role, critical for epithelial morphogenesis during oogenesis; border cell migration. Required in the germarium for the polarization of follicle cells during encapsulation of germline cells. Required for embryonic segmentation and trachea specification. Essential receptor molecule for upd and JAK/STAT signaling during oogenesis. This chain is Cytokine receptor (dome), found in Drosophila melanogaster (Fruit fly).